A 538-amino-acid polypeptide reads, in one-letter code: uncharacterized protein (538 aa).

Residues 1 to 17 form the signal peptide; that stretch reads MNLQILLLLLLFCHVAA. Asparagine 115 carries N-linked (GlcNAc...) asparagine glycosylation.

This is an uncharacterized protein from Caenorhabditis elegans.